The following is a 268-amino-acid chain: Agamous-like MADS-box protein AGL15 (268 aa).

The region spanning 1-61 (MGRGKIEIKR…GKLFEYSSTG (61 aa)) is the MADS-box domain. Positions 80-170 (AEEDCAEVDI…RRQVQELRSF (91 aa)) constitute a K-box domain. Residues 205 to 268 (TDSDTTLQLG…PEAKRQRFSV (64 aa)) form a disordered region. Residues 218 to 232 (EAHDRRTNEGERESP) are compositionally biased toward basic and acidic residues. A compositionally biased stretch (polar residues) spans 233–244 (SSDSVTTNTSSE).

Homodimer. Interacts with SVP, AGL24, AP1, AGL6, AG, AGL1, AGL11, AGL5, AGL16, SOC1 and AGL21. As to expression, expressed at low levels in flowers and siliques. Also present in seedlings. Detected during embryogenesis and accumulates during early seed development (at protein level). Expressed in shoot apices and the base of leaf petioles.

The protein resides in the nucleus. Its subcellular location is the cytoplasm. In terms of biological role, transcription factor involved in the negative regulation of flowering, probably through the photoperiodic pathway. Acts both as an activator and as a repressor of transcription. Binds DNA in a sequence-specific manner in large CArG motif 5'-CC (A/T)8 GG-3'. Participates probably in the regulation of programs active during the early stages of embryo development. Prevents premature perianth senescence and abscission, fruits development and seed desiccation. Stimulates the expression of at least DTA4, LEC2, FUS3, ABI3, AT4G38680/CSP2 and GRP2B/CSP4. Can enhance somatic embryo development in vitro. This chain is Agamous-like MADS-box protein AGL15 (AGL15), found in Arabidopsis thaliana (Mouse-ear cress).